A 285-amino-acid polypeptide reads, in one-letter code: MSRSVLQGFWLLMRADKPVGSYLLLWPTLWALMIAAQGLPPWHITGIFMAGVFVMRSAGCVINDYADRKVDGKVDRTKARPLVSGVVTEKQALGLFATLVGVAFLLVLALNWQTIVLSLGALALASVYPFMKRYTHFPQVVLGAAFGWAIPMAFMAVTEAVPAIAWWLFAINVLWTVAYDTQYAMVDRNDDLQIGVKSTAVLFGQYDRLIIGLLQLSVVVMLLGMGQYLGFTLSFYVGVLLASVLFIHQQRLISGRARQACFSAFLNNNYVGMAIALGIAGHYFM.

7 consecutive transmembrane segments (helical) span residues 20–39, 92–112, 137–157, 159–179, 206–226, 228–248, and 260–280; these read GSYL…AQGL, ALGL…ALNW, FPQV…FMAV, EAVP…TVAY, YDRL…LGMG, YLGF…LFIH, and ACFS…LGIA.

This sequence belongs to the UbiA prenyltransferase family. It depends on Mg(2+) as a cofactor.

The protein resides in the cell inner membrane. It carries out the reaction all-trans-octaprenyl diphosphate + 4-hydroxybenzoate = 4-hydroxy-3-(all-trans-octaprenyl)benzoate + diphosphate. The protein operates within cofactor biosynthesis; ubiquinone biosynthesis. Its function is as follows. Catalyzes the prenylation of para-hydroxybenzoate (PHB) with an all-trans polyprenyl group. Mediates the second step in the final reaction sequence of ubiquinone-8 (UQ-8) biosynthesis, which is the condensation of the polyisoprenoid side chain with PHB, generating the first membrane-bound Q intermediate 3-octaprenyl-4-hydroxybenzoate. The polypeptide is 4-hydroxybenzoate octaprenyltransferase (Pseudoalteromonas atlantica (strain T6c / ATCC BAA-1087)).